The chain runs to 541 residues: Chaperonin GroEL 2 (541 aa).

ATP contacts are provided by residues 29–32, 86–90, Gly413, 476–478, and Asp492; these read TLGP, DGTTT, and NAA.

This sequence belongs to the chaperonin (HSP60) family. As to quaternary structure, forms a cylinder of 14 subunits composed of two heptameric rings stacked back-to-back. Interacts with the co-chaperonin GroES.

It localises to the secreted. The protein resides in the capsule. Its subcellular location is the cell surface. It is found in the cell wall. The catalysed reaction is ATP + H2O + a folded polypeptide = ADP + phosphate + an unfolded polypeptide.. In terms of biological role, together with its co-chaperonin GroES, plays an essential role in assisting protein folding. The GroEL-GroES system forms a nano-cage that allows encapsulation of the non-native substrate proteins and provides a physical environment optimized to promote and accelerate protein folding. The chain is Chaperonin GroEL 2 from Mycobacterium avium (strain 104).